We begin with the raw amino-acid sequence, 349 residues long: Phosphoribosylformylglycinamidine cyclo-ligase (349 aa).

Belongs to the AIR synthase family.

Its subcellular location is the cytoplasm. It carries out the reaction 2-formamido-N(1)-(5-O-phospho-beta-D-ribosyl)acetamidine + ATP = 5-amino-1-(5-phospho-beta-D-ribosyl)imidazole + ADP + phosphate + H(+). It participates in purine metabolism; IMP biosynthesis via de novo pathway; 5-amino-1-(5-phospho-D-ribosyl)imidazole from N(2)-formyl-N(1)-(5-phospho-D-ribosyl)glycinamide: step 2/2. In Lactobacillus delbrueckii subsp. bulgaricus (strain ATCC BAA-365 / Lb-18), this protein is Phosphoribosylformylglycinamidine cyclo-ligase.